A 214-amino-acid chain; its full sequence is Thymidylate kinase (214 aa).

10 to 17 lines the ATP pocket; that stretch reads GPDGAGKT.

Belongs to the thymidylate kinase family.

The enzyme catalyses dTMP + ATP = dTDP + ADP. Phosphorylation of dTMP to form dTDP in both de novo and salvage pathways of dTTP synthesis. The polypeptide is Thymidylate kinase (Lacticaseibacillus casei (strain BL23) (Lactobacillus casei)).